Reading from the N-terminus, the 149-residue chain is Calmodulin (149 aa).

A2 is subject to N-acetylalanine. EF-hand domains are found at residues 8-43, 44-79, 81-116, and 117-149; these read DQIS…LGQN, PTEA…KMKD, DSEE…LGEK, and LTDE…MMAK. D21, D23, D25, C27, E32, D57, D59, N61, T63, E68, D94, D96, N98, and E105 together coordinate Ca(2+). K116 bears the N6,N6,N6-trimethyllysine mark. Ca(2+) contacts are provided by D130, D132, D134, Q136, and E141.

The protein belongs to the calmodulin family.

In terms of biological role, calmodulin mediates the control of a large number of enzymes, ion channels and other proteins by Ca(2+). Among the enzymes to be stimulated by the calmodulin-Ca(2+) complex are a number of protein kinases and phosphatases. This chain is Calmodulin (CAM), found in Malus domestica (Apple).